We begin with the raw amino-acid sequence, 119 residues long: Flagellar transcriptional regulator FlhD (119 aa).

The protein belongs to the FlhD family. In terms of assembly, homodimer; disulfide-linked. Forms a heterohexamer composed of two FlhC and four FlhD subunits. Each FlhC binds a FlhD dimer, forming a heterotrimer, and a hexamer assembles by dimerization of two heterotrimers.

It localises to the cytoplasm. Functions in complex with FlhC as a master transcriptional regulator that regulates transcription of several flagellar and non-flagellar operons by binding to their promoter region. Activates expression of class 2 flagellar genes, including fliA, which is a flagellum-specific sigma factor that turns on the class 3 genes. Also regulates genes whose products function in a variety of physiological pathways. The protein is Flagellar transcriptional regulator FlhD of Yersinia enterocolitica.